Reading from the N-terminus, the 122-residue chain is Large ribosomal subunit protein uL14 (122 aa).

The protein belongs to the universal ribosomal protein uL14 family. As to quaternary structure, part of the 50S ribosomal subunit. Forms a cluster with proteins L3 and L19. In the 70S ribosome, L14 and L19 interact and together make contacts with the 16S rRNA in bridges B5 and B8.

Its function is as follows. Binds to 23S rRNA. Forms part of two intersubunit bridges in the 70S ribosome. The polypeptide is Large ribosomal subunit protein uL14 (Streptococcus uberis (strain ATCC BAA-854 / 0140J)).